We begin with the raw amino-acid sequence, 195 residues long: Imidazoleglycerol-phosphate dehydratase (195 aa).

This sequence belongs to the imidazoleglycerol-phosphate dehydratase family.

It is found in the cytoplasm. The catalysed reaction is D-erythro-1-(imidazol-4-yl)glycerol 3-phosphate = 3-(imidazol-4-yl)-2-oxopropyl phosphate + H2O. The protein operates within amino-acid biosynthesis; L-histidine biosynthesis; L-histidine from 5-phospho-alpha-D-ribose 1-diphosphate: step 6/9. This is Imidazoleglycerol-phosphate dehydratase from Roseobacter denitrificans (strain ATCC 33942 / OCh 114) (Erythrobacter sp. (strain OCh 114)).